A 119-amino-acid chain; its full sequence is MFVKSTTRHIRIYAAEVHNSELVESDNMLTLDVDPDNEFNWDEDALQKVYRKFDELVEAASGEELSDYNLRRIGSDLEHFVRNLLQNGEISYNLKSRVLNYSMGLPKVESPETEGAYNL.

The protein belongs to the complex I NdhM subunit family. In terms of assembly, NDH-1 can be composed of about 15 different subunits; different subcomplexes with different compositions have been identified which probably have different functions.

The protein resides in the cellular thylakoid membrane. The enzyme catalyses a plastoquinone + NADH + (n+1) H(+)(in) = a plastoquinol + NAD(+) + n H(+)(out). It catalyses the reaction a plastoquinone + NADPH + (n+1) H(+)(in) = a plastoquinol + NADP(+) + n H(+)(out). NDH-1 shuttles electrons from an unknown electron donor, via FMN and iron-sulfur (Fe-S) centers, to quinones in the respiratory and/or the photosynthetic chain. The immediate electron acceptor for the enzyme in this species is believed to be plastoquinone. Couples the redox reaction to proton translocation, and thus conserves the redox energy in a proton gradient. Cyanobacterial NDH-1 also plays a role in inorganic carbon-concentration. The polypeptide is NAD(P)H-quinone oxidoreductase subunit M (Crocosphaera subtropica (strain ATCC 51142 / BH68) (Cyanothece sp. (strain ATCC 51142))).